Reading from the N-terminus, the 1017-residue chain is Protein translocase subunit SecA 1 (1017 aa).

ATP-binding positions include Q143, 161 to 165 (GEGKT), and D661. Residues 978–999 (GLNDDDEPLPAQPITTEQKPGR) form a disordered region. C1003, C1005, C1014, and C1015 together coordinate Zn(2+).

Belongs to the SecA family. Monomer and homodimer. Part of the essential Sec protein translocation apparatus which comprises SecA, SecYEG and auxiliary proteins SecDF. Other proteins may also be involved. It depends on Zn(2+) as a cofactor.

Its subcellular location is the cell inner membrane. The protein localises to the cytoplasm. It carries out the reaction ATP + H2O + cellular proteinSide 1 = ADP + phosphate + cellular proteinSide 2.. Part of the Sec protein translocase complex. Interacts with the SecYEG preprotein conducting channel. Has a central role in coupling the hydrolysis of ATP to the transfer of proteins into and across the cell membrane, serving as an ATP-driven molecular motor driving the stepwise translocation of polypeptide chains across the membrane. The chain is Protein translocase subunit SecA 1 from Chlorobium chlorochromatii (strain CaD3).